Reading from the N-terminus, the 609-residue chain is Acetyl-coenzyme A carboxylase carboxyl transferase subunits beta/alpha (609 aa).

Residues Met1–Gly271 form an acetyl-coenzyme A carboxylase carboxyl transferase subunit beta region. The region spanning Ser39–Asp308 is the CoA carboxyltransferase N-terminal domain. The interval Ser39–Asp559 is carboxyltransferase. 4 residues coordinate Zn(2+): Cys43, Cys46, Cys62, and Cys65. The C4-type zinc-finger motif lies at Cys43–Cys65. An acetyl-coenzyme A carboxylase carboxyl transferase subunit alpha region spans residues Val272–Ala582. The CoA carboxyltransferase C-terminal domain occupies Asp314–Asp559. Residues Ala582–Ala592 show a composition bias toward low complexity. The interval Ala582–Arg609 is disordered. Residues Asp594 to Arg609 are compositionally biased toward basic and acidic residues.

This sequence in the N-terminal section; belongs to the AccD/PCCB family. In the C-terminal section; belongs to the AccA family. As to quaternary structure, acetyl-CoA carboxylase is a heterotetramer composed of biotin carboxyl carrier protein (AccB), biotin carboxylase (AccC) and two subunits of ACCase subunit beta/alpha. It depends on Zn(2+) as a cofactor.

The protein resides in the cytoplasm. The catalysed reaction is N(6)-carboxybiotinyl-L-lysyl-[protein] + acetyl-CoA = N(6)-biotinyl-L-lysyl-[protein] + malonyl-CoA. The protein operates within lipid metabolism; malonyl-CoA biosynthesis; malonyl-CoA from acetyl-CoA: step 1/1. Functionally, component of the acetyl coenzyme A carboxylase (ACC) complex. Biotin carboxylase (BC) catalyzes the carboxylation of biotin on its carrier protein (BCCP) and then the CO(2) group is transferred by the transcarboxylase to acetyl-CoA to form malonyl-CoA. This chain is Acetyl-coenzyme A carboxylase carboxyl transferase subunits beta/alpha (accD), found in Frankia alni (strain DSM 45986 / CECT 9034 / ACN14a).